The sequence spans 323 residues: MAYVPAPGYQPTYNPTLPYYQPIPGGLNVGMSVYIQGVASEHMKRFFVNFVVGQDPGSDVAFHFNPRFDGWDKVVFNTLQGGKWGSEERKRSMPFKKGAAFELVFIVLAEHYKVVVNGNPFYEYGHRLPLQMVTHLQVDGDLQLQSINFIGGQPLRPQGPPMMPPYPGPGHCHQQLNSLPTMEGPPTFNPPVPYFGRLQGGLTARRTIIIKGYVPPTGKSFAINFKVGSSGDIALHINPRMGNGTVVRNSLLNGSWGSEEKKITHNPFGPGQFFDLSIRCGLDRFKVYANGQHLFDFAHRLSAFQRVDTLEIQGDVTLSYVQI.

2 consecutive Galectin domains span residues 19-150 (YYQP…INFI) and 194-323 (YFGR…YVQI). 256–262 (WGSEEKK) lines the a beta-D-galactoside pocket. Ser258 carries the post-translational modification Phosphoserine.

As to quaternary structure, monomer.

Its function is as follows. Galectin that binds lactose and a related range of sugars. May be involved in the assembly of adherens junctions. The chain is Galectin-4 (LGALS4) from Homo sapiens (Human).